The primary structure comprises 325 residues: Replication factor C small subunit (325 aa).

Position 47–54 (47–54) interacts with ATP; sequence GPPGTGKT.

Belongs to the activator 1 small subunits family. RfcS subfamily. As to quaternary structure, heteromultimer composed of small subunits (RfcS) and large subunits (RfcL).

In terms of biological role, part of the RFC clamp loader complex which loads the PCNA sliding clamp onto DNA. The protein is Replication factor C small subunit of Aeropyrum pernix (strain ATCC 700893 / DSM 11879 / JCM 9820 / NBRC 100138 / K1).